A 252-amino-acid polypeptide reads, in one-letter code: Transmembrane ascorbate-dependent reductase CYB561 (252 aa).

The residue at position 1 (Met1) is an N-acetylmethionine. The Cytoplasmic portion of the chain corresponds to 1–17 (MESPAGRTPAPGALPYY). Residues 18–38 (VAFSQLLGLTVVAVTGAWLGA) traverse the membrane as a helical segment. The Cytochrome b561 domain occupies 20 to 221 (FSQLLGLTVV…FGAVVLYILT (202 aa)). At 39–52 (YRGGIAWESALQFN) the chain is on the vesicular side. Residues 53-73 (VHPLCMIIGLVFLQGDALLVY) traverse the membrane as a helical segment. 3 residues coordinate heme b: His54, Arg74, and Lys81. Over 74 to 85 (RVFRNEAKRTTK) the chain is Cytoplasmic. Lys81 and Lys85 together coordinate L-ascorbate. The chain crosses the membrane as a helical span at residues 86 to 106 (ILHGLLHVLAFVIALVGLVAV). Residues His88, 117-120 (DLYS), and His122 each bind heme b. At 107-125 (FDYHRKKGIADLYSLHSWC) the chain is on the vesicular side. A helical membrane pass occupies residues 126-146 (GILVFVLFLAQWLVGLGFFLF). Topologically, residues 147–159 (PGASFSLRSRYRP) are cytoplasmic. Arg154 contacts L-ascorbate. A helical transmembrane segment spans residues 160 to 180 (QHVFFGAAIFLLSVGTALLGL). Residues His161 and Glu182 each coordinate heme b. Residues 181–199 (KEALLFQLGTKYSAFESEG) lie on the Vesicular side of the membrane. Residues 200–220 (VLANVLGLLLVAFGAVVLYIL) traverse the membrane as a helical segment. Residues 221 to 252 (TRADWKRPLQAEEQALSMDFKTLTEGDSPSSQ) lie on the Cytoplasmic side of the membrane. Heme b is bound at residue Lys226. Phosphoserine is present on residues Ser248 and Ser250.

Requires heme b as cofactor.

The protein resides in the cytoplasmic vesicle. It localises to the secretory vesicle. It is found in the chromaffin granule membrane. It catalyses the reaction monodehydro-L-ascorbate radical(out) + L-ascorbate(in) = monodehydro-L-ascorbate radical(in) + L-ascorbate(out). Its function is as follows. Transmembrane reductase that uses ascorbate as an electron donor in the cytoplasm and transfers electrons across membranes to reduce monodehydro-L-ascorbate radical in the lumen of secretory vesicles. It is therefore involved the regeneration and homeostasis within secretory vesicles of ascorbate which in turn provides reducing equivalents needed to support the activity of intravesicular enzymes. This chain is Transmembrane ascorbate-dependent reductase CYB561 (CYB561), found in Sus scrofa (Pig).